A 331-amino-acid chain; its full sequence is Gamma-parvin (331 aa).

An N-acetylmethionine modification is found at Met-1. The segment at 18-38 (QPTEEELPRGGKKKYLSPNSK) is disordered. Calponin-homology (CH) domains lie at 44-151 (EELQ…KRFQ) and 210-317 (HAVQ…QKHS).

Belongs to the parvin family. As to quaternary structure, interacts with ILK; the interaction promotes the establishment of cell polarity required for leukocyte migration. Interacts with ARHGEF6; the guanine nucleotide exchange factor activity of ARHGEF6 is essential for the PARVG-induced enhancement of cell spreading. In terms of tissue distribution, expressed strongly in spleen and testis, moderately in lung and weakly in brain and heart.

It localises to the cell junction. It is found in the focal adhesion. Its subcellular location is the cell membrane. The protein localises to the cytoplasm. The protein resides in the cytoskeleton. In terms of biological role, plays a role with ILK in promoting the cell adhesion and spreading of leukocytes. This is Gamma-parvin (Parvg) from Mus musculus (Mouse).